The primary structure comprises 267 residues: Soluble interferon gamma receptor OPG193 (267 aa).

Positions 1 to 17 are cleaved as a signal peptide; sequence MRYIIILAVLFINSIHA. 2 N-linked (GlcNAc...) asparagine; by host glycosylation sites follow: Asn-42 and Asn-150.

It belongs to the type II cytokine receptor family. In terms of assembly, homodimer. Interacts with host IFNG.

Its subcellular location is the secreted. Its function is as follows. Counteracts the antiviral effects of host IFN-gamma. Acts as a soluble IFN-gamma receptor and thus inhibits the interaction between host IFN-gamma and its receptor. The chain is Soluble interferon gamma receptor OPG193 (OPG193) from Cynomys gunnisoni (Gunnison's prairie dog).